The primary structure comprises 213 residues: Cytochrome b6 (213 aa).

A helical transmembrane segment spans residues 30–50 (IFFCLGGLTLLCFIVQCLTGI). Cys-33 lines the heme c pocket. Heme b-binding residues include His-84 and His-98. A run of 3 helical transmembrane segments spans residues 88-108 (CQLM…TGAF), 114-134 (LNWV…FTGY), and 184-204 (LHVM…FIMI). Heme b is bound by residues His-185 and His-200.

It belongs to the cytochrome b family. PetB subfamily. In terms of assembly, the subunits of the cytochrome bc complex are a Rieske Fe-S protein (PetC), cytochrome b6 (PetB), subunit IV (PetD), and a diheme cytochrome c (PetX). Heme b is required as a cofactor. The cofactor is heme c.

It is found in the cell membrane. Component of the cytochrome bc complex which donates electrons to the photosynthetic reaction center. This is Cytochrome b6 from Heliomicrobium gestii (Heliobacterium gestii).